We begin with the raw amino-acid sequence, 407 residues long: Argininosuccinate synthase (407 aa).

Residues alanine 12–serine 20 and alanine 39 each bind ATP. L-citrulline contacts are provided by tyrosine 90 and serine 95. Glycine 120 serves as a coordination point for ATP. L-aspartate contacts are provided by threonine 122, asparagine 126, and aspartate 127. Asparagine 126 serves as a coordination point for L-citrulline. Positions 130, 181, 190, 266, and 278 each coordinate L-citrulline.

Belongs to the argininosuccinate synthase family. Type 1 subfamily. Homotetramer.

Its subcellular location is the cytoplasm. The enzyme catalyses L-citrulline + L-aspartate + ATP = 2-(N(omega)-L-arginino)succinate + AMP + diphosphate + H(+). It participates in amino-acid biosynthesis; L-arginine biosynthesis; L-arginine from L-ornithine and carbamoyl phosphate: step 2/3. This chain is Argininosuccinate synthase, found in Nitrosospira multiformis (strain ATCC 25196 / NCIMB 11849 / C 71).